The sequence spans 146 residues: 3-dehydroquinate dehydratase (146 aa).

Tyrosine 23 serves as the catalytic Proton acceptor. Residues asparagine 75, histidine 81, and aspartate 88 each coordinate substrate. Residue histidine 101 is the Proton donor of the active site. Residues 102 to 103 (LS) and arginine 112 each bind substrate.

The protein belongs to the type-II 3-dehydroquinase family. Homododecamer.

The catalysed reaction is 3-dehydroquinate = 3-dehydroshikimate + H2O. Its pathway is metabolic intermediate biosynthesis; chorismate biosynthesis; chorismate from D-erythrose 4-phosphate and phosphoenolpyruvate: step 3/7. Its function is as follows. Catalyzes a trans-dehydration via an enolate intermediate. The sequence is that of 3-dehydroquinate dehydratase from Saccharophagus degradans (strain 2-40 / ATCC 43961 / DSM 17024).